Here is a 444-residue protein sequence, read N- to C-terminus: ATP-dependent protease ATPase subunit HslU (444 aa).

Residues Ile18, 60-65, Asp257, Glu322, and Arg394 contribute to the ATP site; that span reads GVGKTE.

This sequence belongs to the ClpX chaperone family. HslU subfamily. In terms of assembly, a double ring-shaped homohexamer of HslV is capped on each side by a ring-shaped HslU homohexamer. The assembly of the HslU/HslV complex is dependent on binding of ATP.

The protein resides in the cytoplasm. In terms of biological role, ATPase subunit of a proteasome-like degradation complex; this subunit has chaperone activity. The binding of ATP and its subsequent hydrolysis by HslU are essential for unfolding of protein substrates subsequently hydrolyzed by HslV. HslU recognizes the N-terminal part of its protein substrates and unfolds these before they are guided to HslV for hydrolysis. This is ATP-dependent protease ATPase subunit HslU from Psychromonas ingrahamii (strain DSM 17664 / CCUG 51855 / 37).